Reading from the N-terminus, the 153-residue chain is Calmodulin-like protein 4 (153 aa).

EF-hand domains lie at 8–43 (DQIN…LGAS), 44–79 (PTPG…QIKQ), 81–116 (DPKK…LGEK), and 117–152 (LTHK…PVRD).

It belongs to the calmodulin family. As to quaternary structure, interacts with MYO7B; the interaction mediates the association of CALML4 with the IMAC/intermicrovillar adhesion complex. Interacts with MYO7A.

It is found in the cell projection. The protein localises to the microvillus. As part of the intermicrovillar adhesion complex/IMAC plays a role in epithelial brush border differentiation, controlling microvilli organization and length. Acts as a light chain for MYO7B and is required for efficient targeting of the IMAC to the tips of border brush microvilli. This chain is Calmodulin-like protein 4 (CALML4), found in Bos taurus (Bovine).